The following is a 413-amino-acid chain: Putative ankyrin repeat protein L92 (413 aa).

ANK repeat units follow at residues 1 to 28, 32 to 67, 68 to 104, 105 to 134, 137 to 170, 174 to 208, 212 to 242, and 246 to 275; these read MCACKFATYNSNIGAVKLLLDKGADINC, DGMSALSAVCKNLDLEFRSDFDTIKLLIERGADVNL, TVDGHYTPLMWLIKNLSENDDRFSESKISSIKNLFES, DDDDYFFENKRKNKYNALKLLLDNGANIEA, DGETPLLLACKLSSEITSTKHIKILLKKGAKTNI, DRKTPLMLLCKNCQQYLENEAVDVLIKYGKANINY, IGETALIYLCRISFMSESVQFLLEKGANPNI, and SGNTALHYAVKRHEFEMVEILLRYNASPEI.

The polypeptide is Putative ankyrin repeat protein L92 (Acanthamoeba polyphaga mimivirus (APMV)).